The chain runs to 232 residues: Large ribosomal subunit protein uL1 (232 aa).

This sequence belongs to the universal ribosomal protein uL1 family. As to quaternary structure, part of the 50S ribosomal subunit.

In terms of biological role, binds directly to 23S rRNA. The L1 stalk is quite mobile in the ribosome, and is involved in E site tRNA release. Protein L1 is also a translational repressor protein, it controls the translation of the L11 operon by binding to its mRNA. This Ruegeria sp. (strain TM1040) (Silicibacter sp.) protein is Large ribosomal subunit protein uL1.